A 542-amino-acid polypeptide reads, in one-letter code: Valine N-monooxygenase 1 (542 aa).

Over 1–21 (MAMNVSTTIGLLNATSFASSS) the chain is Cytoplasmic. A helical; Signal-anchor for type II membrane protein membrane pass occupies residues 22 to 42 (SINTVKILFVTLFISIVSTIV). Residues 43-542 (KLQKSAANKE…LAPHLYPTSP (500 aa)) lie on the Lumenal side of the membrane. N278 carries N-linked (GlcNAc...) asparagine glycosylation. Heme is bound at residue C478. N506 carries an N-linked (GlcNAc...) asparagine glycan.

This sequence belongs to the cytochrome P450 family. Requires heme as cofactor. As to expression, expressed in the epidermis, the next two cortex cell layers, the endodermis and the pericycle of leaf petioles. Strong expression around the laticifers among the phloem cells and in parenchymatic cells between the protoxylem and the metaxylem cells. In the leaves, preferentially expressed in the mesophyll cells adjacent to the epidermis.

The protein resides in the microsome membrane. It carries out the reaction L-valine + 2 reduced [NADPH--hemoprotein reductase] + 2 O2 = (E)-2-methylpropanal oxime + 2 oxidized [NADPH--hemoprotein reductase] + CO2 + 3 H2O + 2 H(+). The catalysed reaction is L-valine + reduced [NADPH--hemoprotein reductase] + O2 = N-hydroxy-L-valine + oxidized [NADPH--hemoprotein reductase] + H2O + 2 H(+). It catalyses the reaction N-hydroxy-L-valine + reduced [NADPH--hemoprotein reductase] + O2 = N,N-dihydroxy-L-valine + oxidized [NADPH--hemoprotein reductase] + H2O + H(+). The enzyme catalyses L-isoleucine + 2 reduced [NADPH--hemoprotein reductase] + 2 O2 = (1E,2S)-2-methylbutanal oxime + 2 oxidized [NADPH--hemoprotein reductase] + CO2 + 3 H2O + 2 H(+). It carries out the reaction L-isoleucine + reduced [NADPH--hemoprotein reductase] + O2 = N-hydroxy-L-isoleucine + oxidized [NADPH--hemoprotein reductase] + H2O + 2 H(+). The catalysed reaction is N-hydroxy-L-isoleucine + reduced [NADPH--hemoprotein reductase] + O2 = N,N-dihydroxy-L-isoleucine + oxidized [NADPH--hemoprotein reductase] + H2O + H(+). The protein operates within secondary metabolite biosynthesis. Its activity is regulated as follows. Inhibited by tetcyclasis but not by 1-aminobenzotriazole (ABT). Functionally, involved in the biosynthesis of the cyanogenic glucosides linamarin and lotaustralin. Can use L-valine or L-isoleucine as substrate, but not L-leucine, L-phenylalanine, L-tyrosine, D-valine or D-isoleucine. Catalyzes multi-step reactions starting with two successive N-hydroxylations using L-valine and L-isoleucine as substrates leading to the formation of N,N-dihydroxy-L-valine and N,N-dihydroxy-L-isoleucine, respectively; following spontaneous reactions lead to the production of (E)-2-methylpropanal oxime and (1E,2S)-2-methylbutanal oxime, respectively. The sequence is that of Valine N-monooxygenase 1 from Manihot esculenta (Cassava).